The primary structure comprises 371 residues: Dihydroorotate dehydrogenase (quinone) (371 aa).

FMN is bound by residues 79–83 and Thr-103; that span reads AGFDK. Lys-83 provides a ligand contact to substrate. Position 128–132 (128–132) interacts with substrate; that stretch reads NRMGF. FMN is bound by residues Asn-156 and Asn-189. Residue Asn-189 coordinates substrate. Ser-192 acts as the Nucleophile in catalysis. Asn-194 lines the substrate pocket. FMN is bound by residues Lys-225 and Thr-253. 254-255 contributes to the substrate binding site; it reads NT. Residues Gly-279, Gly-308, and 329-330 contribute to the FMN site; that span reads YT.

It belongs to the dihydroorotate dehydrogenase family. Type 2 subfamily. In terms of assembly, monomer. The cofactor is FMN.

The protein resides in the cell membrane. The enzyme catalyses (S)-dihydroorotate + a quinone = orotate + a quinol. It functions in the pathway pyrimidine metabolism; UMP biosynthesis via de novo pathway; orotate from (S)-dihydroorotate (quinone route): step 1/1. Functionally, catalyzes the conversion of dihydroorotate to orotate with quinone as electron acceptor. This is Dihydroorotate dehydrogenase (quinone) from Corynebacterium glutamicum (strain ATCC 13032 / DSM 20300 / JCM 1318 / BCRC 11384 / CCUG 27702 / LMG 3730 / NBRC 12168 / NCIMB 10025 / NRRL B-2784 / 534).